The primary structure comprises 1345 residues: Membrane-anchored lipid-binding protein LAM4 (1345 aa).

Topologically, residues M1–K1197 are cytoplasmic. 7 disordered regions span residues R51–A80, S115–S134, E139–D164, D190–D302, L356–R397, S425–M447, and S489–Q531. T66 carries the post-translational modification Phosphothreonine. Residues S216–T228 are compositionally biased toward low complexity. Polar residues predominate over residues S246–S271. The span at H283 to S294 shows a compositional bias: low complexity. Polar residues predominate over residues S425 to D436. The span at S498–S516 shows a compositional bias: low complexity. The GRAM domain occupies E549–R616. Positions S665 to I677 are enriched in low complexity. Positions S665–E722 are disordered. The span at S678–Y700 shows a compositional bias: acidic residues. Position 747 is a phosphoserine (S747). 2 consecutive VASt domains span residues N758–A930 and D967–K1139. Residues A930 to Q963 are disordered. Basic residues predominate over residues K1141 to H1158. Positions K1141 to D1172 are disordered. The segment covering S1159–D1172 has biased composition (basic and acidic residues). Residues L1198–P1218 traverse the membrane as a helical segment. Residues R1219–S1345 lie on the Lumenal side of the membrane.

Belongs to the YSP2 family.

It is found in the endoplasmic reticulum membrane. May be involved in sterol transfer between intracellular membranes. This chain is Membrane-anchored lipid-binding protein LAM4, found in Saccharomyces cerevisiae (strain ATCC 204508 / S288c) (Baker's yeast).